A 438-amino-acid chain; its full sequence is Methylenetetrahydrofolate--tRNA-(uracil-5-)-methyltransferase TrmFO (438 aa).

7-12 (GAGLAG) lines the FAD pocket.

The protein belongs to the MnmG family. TrmFO subfamily. Requires FAD as cofactor.

It is found in the cytoplasm. It carries out the reaction uridine(54) in tRNA + (6R)-5,10-methylene-5,6,7,8-tetrahydrofolate + NADH + H(+) = 5-methyluridine(54) in tRNA + (6S)-5,6,7,8-tetrahydrofolate + NAD(+). The catalysed reaction is uridine(54) in tRNA + (6R)-5,10-methylene-5,6,7,8-tetrahydrofolate + NADPH + H(+) = 5-methyluridine(54) in tRNA + (6S)-5,6,7,8-tetrahydrofolate + NADP(+). In terms of biological role, catalyzes the folate-dependent formation of 5-methyl-uridine at position 54 (M-5-U54) in all tRNAs. This Sulfurihydrogenibium sp. (strain YO3AOP1) protein is Methylenetetrahydrofolate--tRNA-(uracil-5-)-methyltransferase TrmFO.